The sequence spans 219 residues: GTP-binding nuclear protein GSP1/CNR1 (219 aa).

Serine 2 is modified (N-acetylserine). The residue at position 2 (serine 2) is a Phosphoserine. Residues 9–173 (EVPTFKLVLV…LWLARKLAGN (165 aa)) form the Small GTPase Ran-type domain. 20–27 (DGGTGKTT) contributes to the GTP binding site. Positions 39-47 (KKYIATIGV) are switch-I. Residues glycine 70, 124 to 127 (NKVD), and 152 to 154 (SAK) each bind GTP. The tract at residues 70 to 86 (GQEKFGGLRDGYYINAQ) is switch-II.

Belongs to the small GTPase superfamily. Ran family. Found in a nuclear export complex with RanGTP, exportin and pre-miRNA. Forms a complex with YRB1. Interacts with BUD5, CEX1, RRP12, SRM1, and DIS3/RRP44.

It is found in the nucleus. In terms of biological role, GTP-binding protein involved in nucleocytoplasmic transport. Required for the import of protein into the nucleus and also for RNA export. Essential for cell viability. By analogy with Ras, Ran may be activated when GTP is exchanged for bound GDP by RCC1 and inactivated when GTP is hydrolyzed by Ran upon activation by RanGAP1. The polypeptide is GTP-binding nuclear protein GSP1/CNR1 (GSP1) (Saccharomyces cerevisiae (strain ATCC 204508 / S288c) (Baker's yeast)).